We begin with the raw amino-acid sequence, 616 residues long: Centrosomal protein of 70 kDa (616 aa).

Coiled-coil stretches lie at residues glutamate 96 to arginine 210 and asparagine 273 to leucine 335. A TPR repeat occupies asparagine 502 to serine 535.

As to quaternary structure, directly interacts with tubulin-gamma; this interaction determines centrosomal localization.

The protein localises to the cytoplasm. It is found in the cytoskeleton. It localises to the microtubule organizing center. The protein resides in the centrosome. Its function is as follows. Plays a role in the organization of both preexisting and nascent microtubules in interphase cells. During mitosis, required for the organization and orientation of the mitotic spindle. This is Centrosomal protein of 70 kDa (Cep70) from Mus musculus (Mouse).